The following is a 1372-amino-acid chain: Collagen alpha-2(I) chain (1372 aa).

The first 22 residues, 1-22 (MLSFVDTRTLLLLAVTSCLATC), serve as a signal peptide directing secretion. At glutamine 23 the chain carries Pyrrolidone carboxylic acid. The propeptide at 23 to 85 (QYLQSGSVRK…PPGLTGNFAA (63 aa)) is N-terminal propeptide. The disordered stretch occupies residues 28-1135 (GSVRKGPTGD…DQPRSQPSLR (1108 aa)). Pro residues predominate over residues 59–77 (MGPPGPPGSPGPPGSPAPP). Lysine 90 carries the post-translational modification Allysine. Positions 95–146 (GPGPMGLMGPRGPPGAVGAPGPQGFQGPAGEPGEPGQTGPAGPRGPAGSPGK) are enriched in low complexity. Over residues 147-161 (AGEDGHPGKPGRPGE) the composition is skewed to basic and acidic residues. Position 183 is a 5-hydroxylysine; alternate (lysine 183). Lysine 183 carries an O-linked (Gal...) hydroxylysine; alternate glycan. 7 stretches are compositionally biased toward low complexity: residues 231–260 (VGAP…SAGP), 285–299 (AGPR…LSGP), 306–327 (PGTN…AGAP), 336–351 (PGPA…RGLV), 390–416 (PGEA…LPGA), 476–495 (LPGI…RGEA), and 519–537 (PGLA…NGAQ). Residues 544-553 (GVQGGKGEQG) are compositionally biased toward gly residues. The segment covering 600–639 (PGESGAAGPSGPIGSRGPSGAPGPDGNKGEAGAVGAPGSA) has biased composition (low complexity). Over residues 640–649 (GASGPGGLPG) the composition is skewed to gly residues. Low complexity-rich tracts occupy residues 681 to 716 (RGIP…PRGS) and 725 to 743 (PAGP…QPGA). Positions 744-753 (KGEKGTKGPK) are enriched in basic and acidic residues. The segment covering 755 to 771 (ENGIVGPTGSVGAAGPS) has biased composition (low complexity). Residues 781 to 790 (GSRGDGGPPG) are compositionally biased toward gly residues. Low complexity-rich tracts occupy residues 792 to 801 (TGFPGAAGRT), 855 to 882 (SGEP…LGLP), 905 to 927 (ISGP…NGAP), 957 to 978 (PGSI…VGPA), and 987 to 1007 (PGPA…PSGP). The span at 1011 to 1022 (RGDKGEPGDKGH) shows a compositional bias: basic and acidic residues. The segment covering 1095 to 1107 (AGPPGPPGPPGPP) has biased composition (pro residues). The propeptide at 1126 to 1372 (DQPRSQPSLR…RVEVGPVCFK (247 aa)) is C-terminal propeptide. The Fibrillar collagen NC1 domain occupies 1139–1372 (YEVDATLKSL…RVEVGPVCFK (234 aa)). 3 disulfide bridges follow: cysteine 1169–cysteine 1201, cysteine 1209–cysteine 1370, and cysteine 1278–cysteine 1323. Residues aspartate 1187, asparagine 1189, glutamine 1190, cysteine 1192, and aspartate 1195 each coordinate Ca(2+). A glycan (N-linked (GlcNAc...) asparagine) is linked at asparagine 1273.

The protein belongs to the fibrillar collagen family. Trimers of one alpha 2(I) and two alpha 1(I) chains. Interacts (via C-terminus) with TMEM131 (via PapD-L domain); the interaction is direct and is involved in assembly and TRAPPIII ER-to-Golgi transport complex-dependent secretion of collagen. In terms of processing, prolines at the third position of the tripeptide repeating unit (G-X-Y) are hydroxylated in some or all of the chains. As to expression, expressed in kidney glomeruli.

Its subcellular location is the secreted. The protein localises to the extracellular space. It is found in the extracellular matrix. In terms of biological role, type I collagen is a member of group I collagen (fibrillar forming collagen). The sequence is that of Collagen alpha-2(I) chain (Col1a2) from Mus musculus (Mouse).